The chain runs to 428 residues: UPF0761 membrane protein Ppha_1623 (428 aa).

Transmembrane regions (helical) follow at residues L52–F72, S108–V128, F148–A168, L189–V209, F216–S233, and G252–L272.

Belongs to the UPF0761 family.

It localises to the cell inner membrane. The polypeptide is UPF0761 membrane protein Ppha_1623 (Pelodictyon phaeoclathratiforme (strain DSM 5477 / BU-1)).